Consider the following 565-residue polypeptide: NAD-dependent malic enzyme (565 aa).

Tyrosine 104 serves as the catalytic Proton donor. NAD(+) is bound at residue arginine 157. The active-site Proton acceptor is the lysine 175. The a divalent metal cation site is built by glutamate 246, aspartate 247, and aspartate 270. 2 residues coordinate NAD(+): aspartate 270 and asparagine 418.

It belongs to the malic enzymes family. In terms of assembly, homotetramer. The cofactor is Mg(2+). Requires Mn(2+) as cofactor.

The catalysed reaction is (S)-malate + NAD(+) = pyruvate + CO2 + NADH. It catalyses the reaction oxaloacetate + H(+) = pyruvate + CO2. The polypeptide is NAD-dependent malic enzyme (Salmonella choleraesuis (strain SC-B67)).